Here is a 303-residue protein sequence, read N- to C-terminus: Glycine--tRNA ligase alpha subunit (303 aa).

The protein belongs to the class-II aminoacyl-tRNA synthetase family. In terms of assembly, tetramer of two alpha and two beta subunits.

The protein resides in the cytoplasm. The catalysed reaction is tRNA(Gly) + glycine + ATP = glycyl-tRNA(Gly) + AMP + diphosphate. The polypeptide is Glycine--tRNA ligase alpha subunit (Streptococcus equi subsp. zooepidemicus (strain H70)).